The following is a 199-amino-acid chain: MAHSQLLSSEERLFCYRWFHSLLAKELSEPQLQALQAGQFASFFAFLAELGFQPQVTDLQNELAKLTAYDSPRLELAADFAQCFLLEGKLSALPYASYYLDERDLSENLAVMDQWLTKFQLKINRLHNEPSDHLCIYLEVLIKLIETEQPVQVQQQFIRQQLLGWLPQWAEKTAQIHSSTAFYQIISNLLLGFLQQDIT.

Belongs to the TorD/DmsD family. TorD subfamily.

The protein resides in the cytoplasm. Involved in the biogenesis of TorA. Acts on TorA before the insertion of the molybdenum cofactor and, as a result, probably favors a conformation of the apoenzyme that is competent for acquiring the cofactor. The chain is Chaperone protein TorD from Actinobacillus pleuropneumoniae serotype 3 (strain JL03).